The following is a 422-amino-acid chain: Serine--tRNA ligase (422 aa).

230–232 (TAE) is an L-serine binding site. ATP is bound at residue 261–263 (RNE). Glu284 serves as a coordination point for L-serine. 347–350 (EVSS) serves as a coordination point for ATP. Ser383 is an L-serine binding site.

Belongs to the class-II aminoacyl-tRNA synthetase family. Type-1 seryl-tRNA synthetase subfamily. In terms of assembly, homodimer. The tRNA molecule binds across the dimer.

The protein resides in the cytoplasm. The catalysed reaction is tRNA(Ser) + L-serine + ATP = L-seryl-tRNA(Ser) + AMP + diphosphate + H(+). The enzyme catalyses tRNA(Sec) + L-serine + ATP = L-seryl-tRNA(Sec) + AMP + diphosphate + H(+). It functions in the pathway aminoacyl-tRNA biosynthesis; selenocysteinyl-tRNA(Sec) biosynthesis; L-seryl-tRNA(Sec) from L-serine and tRNA(Sec): step 1/1. Functionally, catalyzes the attachment of serine to tRNA(Ser). Is also able to aminoacylate tRNA(Sec) with serine, to form the misacylated tRNA L-seryl-tRNA(Sec), which will be further converted into selenocysteinyl-tRNA(Sec). This is Serine--tRNA ligase from Herpetosiphon aurantiacus (strain ATCC 23779 / DSM 785 / 114-95).